The following is a 471-amino-acid chain: V-type ATP synthase beta chain (471 aa).

The protein belongs to the ATPase alpha/beta chains family.

Its function is as follows. Produces ATP from ADP in the presence of a proton gradient across the membrane. The V-type beta chain is a regulatory subunit. The polypeptide is V-type ATP synthase beta chain (Streptococcus pyogenes serotype M18 (strain MGAS8232)).